We begin with the raw amino-acid sequence, 326 residues long: ATP synthase gamma chain (326 aa).

This sequence belongs to the ATPase gamma chain family. F-type ATPases have 2 components, CF(1) - the catalytic core - and CF(0) - the membrane proton channel. CF(1) has five subunits: alpha(3), beta(3), gamma(1), delta(1), epsilon(1). CF(0) has three main subunits: a, b and c.

It is found in the cell membrane. Its function is as follows. Produces ATP from ADP in the presence of a proton gradient across the membrane. The gamma chain is believed to be important in regulating ATPase activity and the flow of protons through the CF(0) complex. This Corynebacterium jeikeium (strain K411) protein is ATP synthase gamma chain.